The following is a 153-amino-acid chain: MSLDLALDVQYATASDYLPSEEQFALWVKTAIGNSMEQAELTIRIVDSRESQMLNSTYRGKDKPTNVLSFPFEAPPEIELPLLGDLVICATVVENEAREQDKTLEAHWAHMVVHGCLHLLGYDHIEDEEAEEMESLETQLIESLGFTDPYKEQ.

Residues H114, H118, and H124 each contribute to the Zn(2+) site.

This sequence belongs to the endoribonuclease YbeY family. It depends on Zn(2+) as a cofactor.

The protein localises to the cytoplasm. In terms of biological role, single strand-specific metallo-endoribonuclease involved in late-stage 70S ribosome quality control and in maturation of the 3' terminus of the 16S rRNA. The protein is Endoribonuclease YbeY of Shewanella sp. (strain MR-4).